The chain runs to 29 residues: Myosin heavy chain, muscle (29 aa).

Positions 1–16 (SKYESEGVARSEELQE) are enriched in basic and acidic residues. Residues 1–29 (SKYESEGVARSEELQEVHQAFADAGRKPI) are disordered.

Muscle myosin is a hexameric protein that consists of 2 heavy chain subunits (MHC), 2 alkali light chain subunits (MLC) and 2 regulatory light chain subunits (MLC-2).

The protein resides in the cytoplasm. It localises to the myofibril. Functionally, muscle contraction. This Bombyx mori (Silk moth) protein is Myosin heavy chain, muscle.